A 220-amino-acid polypeptide reads, in one-letter code: N-(5'-phosphoribosyl)anthranilate isomerase (220 aa).

This sequence belongs to the TrpF family.

It catalyses the reaction N-(5-phospho-beta-D-ribosyl)anthranilate = 1-(2-carboxyphenylamino)-1-deoxy-D-ribulose 5-phosphate. The protein operates within amino-acid biosynthesis; L-tryptophan biosynthesis; L-tryptophan from chorismate: step 3/5. This chain is N-(5'-phosphoribosyl)anthranilate isomerase, found in Xylella fastidiosa (strain 9a5c).